The primary structure comprises 663 residues: Tripartite terminase subunit 3 (663 aa).

The short motif at 205-212 (VPRRHGKT) is the Walker A motif element. A Walker B motif motif is present at residues 297 to 302 (LLIVDE). Residue glutamate 302 is the For ATPase activity of the active site. Residues aspartate 455, glutamate 526, and aspartate 640 each act as for nuclease activity in the active site.

This sequence belongs to the herpesviridae TRM3 protein family. As to quaternary structure, interacts with the terminase subunits TRM1 and TRM2. Interacts with portal protein.

It localises to the host nucleus. Its function is as follows. Component of the molecular motor that translocates viral genomic DNA in empty capsid during DNA packaging. Forms a tripartite terminase complex together with TRM1 and TRM2 in the host cytoplasm. Once the complex reaches the host nucleus, it interacts with the capsid portal vertex. This portal forms a ring in which genomic DNA is translocated into the capsid. TRM3 carries an RNase H-like nuclease activity that plays an important role for the cleavage of concatemeric viral DNA into unit length genomes. In Human herpesvirus 7 (strain JI) (HHV-7), this protein is Tripartite terminase subunit 3.